An 890-amino-acid polypeptide reads, in one-letter code: DNA mismatch repair protein MutS (890 aa).

An ATP-binding site is contributed by 607-614; sequence GPNMSGKS.

Belongs to the DNA mismatch repair MutS family.

This protein is involved in the repair of mismatches in DNA. It is possible that it carries out the mismatch recognition step. This protein has a weak ATPase activity. This chain is DNA mismatch repair protein MutS, found in Bacillus thuringiensis (strain Al Hakam).